The following is a 1374-amino-acid chain: Ribonuclease 3 (1374 aa).

Disordered regions lie at residues 1–95, 130–406, and 452–497; these read MMQG…PLPP, PPVP…EEEE, and LGSR…SSSS. Polar residues predominate over residues 59–68; sequence PSTTFSNSPA. Pro residues-rich tracts occupy residues 70–95 and 145–160; these read NFLPPRPDFVPFPPPMPPSAQGPLPP and MMPPPSMPHPPPPPVM. Over residues 182–202 the composition is skewed to low complexity; that stretch reads FNSFQNNPSSFLPSANNSSSP. Composition is skewed to basic and acidic residues over residues 216 to 289 and 298 to 313; these read PSER…ERER and RRSPSLERSYKKEYKR. Phosphoserine occurs at positions 355 and 373. Over residues 364-399 the composition is skewed to basic and acidic residues; it reads RWEEEKDRWSDNQSSGKDKNYTSIKEKEPEETMPDK. Residues 390 to 1365 form a necessary for interaction with DGCR8 and pri-miRNA processing activity region; the sequence is KEPEETMPDK…RWEREHQERE (976 aa). A compositionally biased stretch (acidic residues) spans 475–491; sequence EDLESSSESECESDEDS. Zn(2+)-binding residues include cysteine 536, cysteine 538, histidine 549, cysteine 561, histidine 609, cysteine 676, and histidine 680. 2 RNase III domains span residues 876–1056 and 1107–1233; these read LMHL…LEGS and LTEF…IDKD. Residue glutamate 969 coordinates Mg(2+). A Zn(2+)-binding site is contributed by histidine 1026. Residues asparagine 1042, glutamate 1045, glutamate 1147, aspartate 1219, and glutamate 1222 each contribute to the Mg(2+) site. Positions 1260–1334 constitute a DRBM domain; that stretch reads DPKSQLQQCC…AMDALEKYNF (75 aa).

The protein belongs to the ribonuclease III family. As to quaternary structure, component of the microprocessor complex, or pri-miRNA processing protein complex, which is composed of DROSHA and DGCR8. The microprocessor complex is a heterotrimer; each of the two DROSHA RNase III domains binds one DGCR8 (via C-terminal region). Interacts with SP1 and SNIP1. Interacts with SRRT/ARS2. Interacts with CPSF3 and ISY1; this interaction is in an RNA dependent manner. Interacts with PUS10; interaction promotes pri-miRNAs processing. Mg(2+) is required as a cofactor. Mn(2+) serves as cofactor. In terms of processing, degraded by autophagy in response to neuronal activity in motor neurons. In terms of tissue distribution, ubiquitous.

Its subcellular location is the nucleus. The protein resides in the nucleolus. It is found in the cytoplasm. It catalyses the reaction Endonucleolytic cleavage to 5'-phosphomonoester.. Ribonuclease III double-stranded (ds) RNA-specific endoribonuclease that is involved in the initial step of microRNA (miRNA) biogenesis. Component of the microprocessor complex that is required to process primary miRNA transcripts (pri-miRNAs) to release precursor miRNA (pre-miRNA) in the nucleus. Within the microprocessor complex, DROSHA cleaves the 3' and 5' strands of a stem-loop in pri-miRNAs (processing center 11 bp from the dsRNA-ssRNA junction) to release hairpin-shaped pre-miRNAs that are subsequently cut by the cytoplasmic DICER to generate mature miRNAs. Involved also in pre-rRNA processing. Cleaves double-strand RNA and does not cleave single-strand RNA. Involved in the formation of GW bodies. Plays a role in growth homeostasis in response to autophagy in motor neurons. The polypeptide is Ribonuclease 3 (DROSHA) (Homo sapiens (Human)).